The following is a 98-amino-acid chain: NADH-ubiquinone oxidoreductase chain 4L (98 aa).

The next 3 helical transmembrane spans lie at 1–21 (MSLV…GLLM), 29–49 (SLLC…LTIL), and 61–81 (IILL…LVMV).

This sequence belongs to the complex I subunit 4L family. In terms of assembly, core subunit of respiratory chain NADH dehydrogenase (Complex I) which is composed of 45 different subunits.

It is found in the mitochondrion inner membrane. It carries out the reaction a ubiquinone + NADH + 5 H(+)(in) = a ubiquinol + NAD(+) + 4 H(+)(out). In terms of biological role, core subunit of the mitochondrial membrane respiratory chain NADH dehydrogenase (Complex I) which catalyzes electron transfer from NADH through the respiratory chain, using ubiquinone as an electron acceptor. Part of the enzyme membrane arm which is embedded in the lipid bilayer and involved in proton translocation. This Rangifer tarandus (Reindeer) protein is NADH-ubiquinone oxidoreductase chain 4L (MT-ND4L).